The chain runs to 538 residues: [Pyruvate dehydrogenase [acetyl-transferring]]-phosphatase 1, mitochondrial (538 aa).

Residues 1–71 (MPAPTQLFFP…WWQYTQGRRY (71 aa)) constitute a mitochondrion transit peptide. A PPM-type phosphatase domain is found at 109–525 (ILGFDSNQLP…DDITIIVVQF (417 aa)). 2 residues coordinate Mn(2+): Asp144 and Gly145. Lys202 is subject to N6-acetyllysine. The Mn(2+) site is built by Asp418 and Asp516.

The protein belongs to the PP2C family. As to quaternary structure, heterodimer of a catalytic (PDP1) and a regulatory (PDPR) subunit. It depends on Mn(2+) as a cofactor. Mg(2+) serves as cofactor.

Its subcellular location is the mitochondrion. The catalysed reaction is O-phospho-L-seryl-[pyruvate dehydrogenase E1 alpha subunit] + H2O = L-seryl-[pyruvate dehydrogenase E1 alpha subunit] + phosphate. Its activity is regulated as follows. Magnesium-dependent and calcium-stimulated. PDP1 activity strongly depends on its Ca(2+)-dependent binding to the lipoyl domain of E2 subunit of component of the pyruvate dehydrogenase complex. Functionally, mitochondrial enzyme that catalyzes the dephosphorylation and concomitant reactivation of the alpha subunit of the E1 component of the pyruvate dehydrogenase complex (PDC), thereby stimulating the conversion of pyruvate into acetyl-CoA. The chain is [Pyruvate dehydrogenase [acetyl-transferring]]-phosphatase 1, mitochondrial (Pdp1) from Mus musculus (Mouse).